The sequence spans 150 residues: Large ribosomal subunit protein bL9 (150 aa).

It belongs to the bacterial ribosomal protein bL9 family.

Binds to the 23S rRNA. This is Large ribosomal subunit protein bL9 from Burkholderia pseudomallei (strain 668).